A 315-amino-acid polypeptide reads, in one-letter code: Indoleacetate decarboxylase activating enzyme (315 aa).

Residues 21–311 (HDGPGIRTNV…ADIIEAHGVK (291 aa)) form the Radical SAM core domain. [4Fe-4S] cluster contacts are provided by C35, C39, C42, C61, C64, C67, C71, C98, C101, C106, and C110. 2 4Fe-4S ferredoxin-type domains span residues 52–81 (PQLL…AITD) and 89–120 (GYVH…IAGE). S-adenosyl-L-methionine is bound by residues G149, 198–200 (DCK), and H271.

The protein belongs to the organic radical-activating enzymes family. It depends on [4Fe-4S] cluster as a cofactor.

It carries out the reaction glycyl-[protein] + reduced [flavodoxin] + S-adenosyl-L-methionine = glycin-2-yl radical-[protein] + semiquinone [flavodoxin] + 5'-deoxyadenosine + L-methionine + H(+). Its function is as follows. Catalyzes activation of the indoleacetate decarboxylase OsIAD under anaerobic conditions by generation of an organic free radical on a glycine residue, via a homolytic cleavage of S-adenosyl-L-methionine (SAM). This Tractidigestivibacter scatoligenes (Olsenella scatoligenes) protein is Indoleacetate decarboxylase activating enzyme.